Reading from the N-terminus, the 153-residue chain is Riboflavin synthase (153 aa).

It belongs to the DMRL synthase family. Homooligomer. It depends on Mg(2+) as a cofactor.

The enzyme catalyses 2 6,7-dimethyl-8-(1-D-ribityl)lumazine + H(+) = 5-amino-6-(D-ribitylamino)uracil + riboflavin. Its pathway is cofactor biosynthesis; riboflavin biosynthesis; riboflavin from 2-hydroxy-3-oxobutyl phosphate and 5-amino-6-(D-ribitylamino)uracil: step 2/2. Inhibited by EDTA. The chain is Riboflavin synthase (ribC) from Methanothermobacter thermautotrophicus (strain ATCC 29096 / DSM 1053 / JCM 10044 / NBRC 100330 / Delta H) (Methanobacterium thermoautotrophicum).